Reading from the N-terminus, the 576-residue chain is MNIQALINDKVSQALEAAGAPAGSPAAVRQSAKIQFGDYQANGVMGVAKKLGTNPREFAQKVIDVLDLDGIAEKVEIAGPGFINIFLDKSWLAARAEEALTDDRIGVAAEKQQNIVVDYSAPNVAKEMHVGHLRSTIIGDAVVRTLEFLGHNVVRANHIGDWGTQFGMLIANLERVQNETGEVSMELADLEGFYRESKKLYDEDEEFAVRARAFVVKLQSGDEYCAEMWKKLVDVTMVQNQINYDRLNVSLTRDNVMGESMYNYMLPGIVADLKEKGLAVESDGAQVVFLDEYKNKDGDPMGVIIQKRDGGFLYTTTDIACAKYRFEQLNADRVLYFIDSRQHQHLMQAWSIVRKAGYVPEEVTLEHHAFGMMLGKDGRPFKTRAGGTVRLADLLDESEVRAAKLIEAKNPDLDTAEKDKIAKTVAMAAVKYADLSKHRTTDYIFDWDNMLAFEGNTAPYMQYAYTRVASIFKRADVNLADLTHPIVINDEKEQALLSTLLQFEEAVLNVSREGQPHLMCTYLFELAGKFSSFYEACPILNAEEAVKQSRLKLALLTAKTIKQGLDLLGIETLERM.

The 'HIGH' region motif lies at 122–132; sequence PNVAKEMHVGH.

It belongs to the class-I aminoacyl-tRNA synthetase family. As to quaternary structure, monomer.

The protein resides in the cytoplasm. The enzyme catalyses tRNA(Arg) + L-arginine + ATP = L-arginyl-tRNA(Arg) + AMP + diphosphate. The polypeptide is Arginine--tRNA ligase (Photobacterium profundum (strain SS9)).